We begin with the raw amino-acid sequence, 346 residues long: MITLAVDCMGGDHGPRVTLAACRQFLDSHSDARLLLVGQPDALAGFAHERASVVPASEVVGMDDPIEVALRRKKDSSMRVAIQQVKDGQAAAAVSAGNTGALMAISRYLLKTLDGIDRPAIAPQLPNAKGGATTVLDLGANVDCSAEHLLQFAVMGSALVSALNNEEAPSVGLLNIGEEQIKGSEVIKRAGELLRAAGKAGHLNFYGNVEGNDIFKGTTQVVVCDGFVGNVALKSSEGVASMISNALKQEFKRNIFTKMAAIVAYPVLTALMKRVDHRRHNGAALLGLRGLVFKSHGSADALAFEHALNRAYDAARNNLLDRVRTRISAALPLLLAAQSESGPSAP.

Belongs to the PlsX family. As to quaternary structure, homodimer. Probably interacts with PlsY.

It is found in the cytoplasm. The catalysed reaction is a fatty acyl-[ACP] + phosphate = an acyl phosphate + holo-[ACP]. It participates in lipid metabolism; phospholipid metabolism. Functionally, catalyzes the reversible formation of acyl-phosphate (acyl-PO(4)) from acyl-[acyl-carrier-protein] (acyl-ACP). This enzyme utilizes acyl-ACP as fatty acyl donor, but not acyl-CoA. This Delftia acidovorans (strain DSM 14801 / SPH-1) protein is Phosphate acyltransferase.